The sequence spans 210 residues: Imidazole glycerol phosphate synthase subunit HisH (210 aa).

One can recognise a Glutamine amidotransferase type-1 domain in the interval 1–205 (MIAVINYGAG…VELALSRGSG (205 aa)). The active-site Nucleophile is the C79. Active-site residues include H180 and E182.

Heterodimer of HisH and HisF.

It localises to the cytoplasm. The enzyme catalyses 5-[(5-phospho-1-deoxy-D-ribulos-1-ylimino)methylamino]-1-(5-phospho-beta-D-ribosyl)imidazole-4-carboxamide + L-glutamine = D-erythro-1-(imidazol-4-yl)glycerol 3-phosphate + 5-amino-1-(5-phospho-beta-D-ribosyl)imidazole-4-carboxamide + L-glutamate + H(+). The catalysed reaction is L-glutamine + H2O = L-glutamate + NH4(+). Its pathway is amino-acid biosynthesis; L-histidine biosynthesis; L-histidine from 5-phospho-alpha-D-ribose 1-diphosphate: step 5/9. Functionally, IGPS catalyzes the conversion of PRFAR and glutamine to IGP, AICAR and glutamate. The HisH subunit catalyzes the hydrolysis of glutamine to glutamate and ammonia as part of the synthesis of IGP and AICAR. The resulting ammonia molecule is channeled to the active site of HisF. The polypeptide is Imidazole glycerol phosphate synthase subunit HisH (Herpetosiphon aurantiacus (strain ATCC 23779 / DSM 785 / 114-95)).